A 259-amino-acid chain; its full sequence is tRNA pseudouridine synthase A (259 aa).

Asp52 serves as the catalytic Nucleophile. Tyr113 contributes to the substrate binding site.

It belongs to the tRNA pseudouridine synthase TruA family. In terms of assembly, homodimer.

The catalysed reaction is uridine(38/39/40) in tRNA = pseudouridine(38/39/40) in tRNA. In terms of biological role, formation of pseudouridine at positions 38, 39 and 40 in the anticodon stem and loop of transfer RNAs. This chain is tRNA pseudouridine synthase A, found in Allorhizobium ampelinum (strain ATCC BAA-846 / DSM 112012 / S4) (Agrobacterium vitis (strain S4)).